The following is a 296-amino-acid chain: Protein ea31 (296 aa).

In Escherichia phage lambda (Bacteriophage lambda), this protein is Protein ea31 (ea31).